The chain runs to 577 residues: Proline--tRNA ligase (577 aa).

It belongs to the class-II aminoacyl-tRNA synthetase family. ProS type 1 subfamily. Homodimer.

The protein resides in the cytoplasm. The catalysed reaction is tRNA(Pro) + L-proline + ATP = L-prolyl-tRNA(Pro) + AMP + diphosphate. Catalyzes the attachment of proline to tRNA(Pro) in a two-step reaction: proline is first activated by ATP to form Pro-AMP and then transferred to the acceptor end of tRNA(Pro). As ProRS can inadvertently accommodate and process non-cognate amino acids such as alanine and cysteine, to avoid such errors it has two additional distinct editing activities against alanine. One activity is designated as 'pretransfer' editing and involves the tRNA(Pro)-independent hydrolysis of activated Ala-AMP. The other activity is designated 'posttransfer' editing and involves deacylation of mischarged Ala-tRNA(Pro). The misacylated Cys-tRNA(Pro) is not edited by ProRS. This Marinobacter nauticus (strain ATCC 700491 / DSM 11845 / VT8) (Marinobacter aquaeolei) protein is Proline--tRNA ligase.